The sequence spans 603 residues: NADH-ubiquinone oxidoreductase chain 5 (603 aa).

16 helical membrane passes run 4 to 24 (YTTMAILTLTSLIPPITATLI), 36 to 56 (VKMTIASTFMISLFPTMMFMC), 87 to 107 (MMFIPIALFVTWSIMEFSLWY), 114 to 134 (INQFFKYLLIFLTTMLILVTA), 137 to 157 (LFQLFIGWEGVGIMSFLLIGW), 171 to 191 (AILYNRIGDIGFILALAWFLL), 200 to 220 (QMILLNSNPNFLPLAGLLLAA), 241 to 261 (TPVSALLHSSTMVVAGVFLLI), 272 to 292 (LIQTLTLCLGAITTLFTAICA), 301 to 320 (IVAFSTSSQLGLMVVTIGIN), 325 to 347 (AFLHICTHAFFKAMLFMCSGSII), 366 to 386 (LPLTSTSLTIGSLALTGMPFL), 407 to 429 (WALSTTLIATSLTSAYSTRMILL), 457 to 477 (LTIGSLLAGFLIINSIPPTSP), 482 to 502 (IPLYLKLTALSITLLGFLTAF), and 583 to 603 (MIKLYSLSLLIPLSLTLLLIM).

It belongs to the complex I subunit 5 family. In terms of assembly, core subunit of respiratory chain NADH dehydrogenase (Complex I) which is composed of 45 different subunits.

It is found in the mitochondrion inner membrane. It carries out the reaction a ubiquinone + NADH + 5 H(+)(in) = a ubiquinol + NAD(+) + 4 H(+)(out). Core subunit of the mitochondrial membrane respiratory chain NADH dehydrogenase (Complex I) which catalyzes electron transfer from NADH through the respiratory chain, using ubiquinone as an electron acceptor. Essential for the catalytic activity and assembly of complex I. The protein is NADH-ubiquinone oxidoreductase chain 5 (MT-ND5) of Hylobates lar (Lar gibbon).